The sequence spans 21 residues: Putative NADH dehydrogenase subunit PS9 (21 aa).

This Pinus strobus (Eastern white pine) protein is Putative NADH dehydrogenase subunit PS9.